The chain runs to 162 residues: MALVEGNNGVSGGAVSFSEEQEALVLKSWAIMKKDSANIGLRFFLKIFEVAPSASQMFSFLRNSDVPLEKNPKLKTHAMSVFVMLRKAGKVTVRDTTLKRLGATHFKYGVGDAHFEVTRFALLETIKEAVPVDMWSPAMKSAWSEAYNQLVAAIKQEMKPAE.

Residues Ser-16–Lys-159 form the Globin domain. A Homodimerization motif is present at residues Glu-49–Ser-53. Positions 59, 73, 77, 100, 104, and 105 each coordinate heme b. The Homodimerization motif lies at Asp-112–Glu-124.

It belongs to the plant globin family. Homodimer. Heme b serves as cofactor. In terms of tissue distribution, mainly expressed in germinating seeds, seedlings, roots, flowers and leaves.

The protein localises to the cytoplasm. The protein resides in the nucleus. It carries out the reaction Fe(III)-heme b-[protein] + nitric oxide + H2O = Fe(II)-heme b-[protein] + nitrite + 2 H(+). Phytoglobin that reduces nitrite to nitric oxide under anoxic conditions (e.g. during flooding or in waterlogged soil). May not function as an oxygen storage or transport protein. Has an unusually high affinity for O(2) through an hexacoordinate heme iron because of a very low dissociation constant. Promotes tolerance to low potassium K(+) conditions. The chain is Anaerobic nitrite reductase NSHB2 from Oryza sativa subsp. indica (Rice).